The following is a 220-amino-acid chain: Adenylate kinase (220 aa).

An ATP-binding site is contributed by 10–15 (GAGKGT). Residues 30–59 (STGDMLRAAVKAGTPLGVEAKGYMDAGKLV) form an NMP region. AMP contacts are provided by residues Thr-31, Arg-36, 57-59 (KLV), 85-88 (GFPR), and Gln-92. The interval 122 to 159 (GRRTHPASGRTYHVKFNPPKVEGKDDVTGEPLIQRDDD) is LID. ATP-binding positions include Arg-123 and 132–133 (TY). Positions 156 and 167 each coordinate AMP. ATP is bound at residue Gly-206.

The protein belongs to the adenylate kinase family. As to quaternary structure, monomer.

The protein resides in the cytoplasm. It carries out the reaction AMP + ATP = 2 ADP. The protein operates within purine metabolism; AMP biosynthesis via salvage pathway; AMP from ADP: step 1/1. Catalyzes the reversible transfer of the terminal phosphate group between ATP and AMP. Plays an important role in cellular energy homeostasis and in adenine nucleotide metabolism. This Burkholderia multivorans (strain ATCC 17616 / 249) protein is Adenylate kinase.